Consider the following 526-residue polypeptide: Delayed-rectifier potassium channel regulatory subunit KCNS1 (526 aa).

The Cytoplasmic segment spans residues 1 to 217 (MLMLLVRGTH…LTMENPGYSL (217 aa)). A helical transmembrane segment spans residues 218 to 239 (PSKLFSCVSISVVLASIAAMCI). The Extracellular portion of the chain corresponds to 240-270 (HSLPEYQAREAAAAVAAVAAGRSPEGVRDDP). The chain crosses the membrane as a helical span at residues 271 to 293 (VLRRLEYFCIAWFSFEVSSRLLL). Residues 294-304 (APSTRNFFCHP) lie on the Cytoplasmic side of the membrane. A helical membrane pass occupies residues 305–322 (LNLIDIVSVLPFYLTLLA). Residues 323 to 337 (GVALGDQGGKEFGHL) lie on the Extracellular side of the membrane. A helical; Voltage-sensor transmembrane segment spans residues 338 to 358 (GKVVQVFRLMRIFRVLKLARH). Residues 359–373 (STGLRSLGATLKHSY) lie on the Cytoplasmic side of the membrane. Residues 374–395 (REVGILLLYLAVGVSVFSGVAY) traverse the membrane as a helical segment. The Extracellular portion of the chain corresponds to 396–408 (TAEKEEDVGFNTI). Positions 409-420 (PACWWWGTVSMT) form an intramembrane region, helical. Positions 421 to 426 (TVGYGD) match the Selectivity filter motif. Residues 421 to 428 (TVGYGDVV) lie within the membrane without spanning it. At 429 to 435 (PVTVAGK) the chain is on the extracellular side. The helical transmembrane segment at 436–464 (LAASGCILGGILVVALPITIIFNKFSHFY) threads the bilayer. Over 465–526 (RRQKALEAAV…PSEPPHPQMY (62 aa)) the chain is Cytoplasmic. The tract at residues 491 to 526 (GVSEASLETSRETSQEGRSADLESQAPSEPPHPQMY) is disordered. The span at 499-511 (TSRETSQEGRSAD) shows a compositional bias: basic and acidic residues.

It belongs to the potassium channel family. S (TC 1.A.1.2) subfamily. Kv9.1/KCNS1 sub-subfamily. As to quaternary structure, heterotetramer with KCNB1. Heterotetramer with KCNB2. Does not form homomultimers.

Its subcellular location is the cell membrane. Functionally, potassium channel regulatory subunit that modulate the delayed rectifier voltage-gated potassium channel activity of KCNB1 and KCNB2 by altering their kinetics, expression levels, and shifting the half-inactivation potential to more polarized values. While it does not form functional channels on its own, it can form functional heterotetrameric channels with KCNB1 and KCNB2. Each regulatory subunit has unique regulatory properties that can lead to extensive inhibition, significant changes in kinetics, and/or substantial shifts in the voltage dependencies of the inactivation process. The chain is Delayed-rectifier potassium channel regulatory subunit KCNS1 from Pongo abelii (Sumatran orangutan).